The sequence spans 248 residues: Probable N-acetylglucosaminyl-phosphatidylinositol de-N-acetylase (248 aa).

At 1 to 7 the chain is on the lumenal side; the sequence is MIWFWST. Residues 8–24 traverse the membrane as a helical segment; that stretch reads LLVTAIAVLSTANESSS. Topologically, residues 25 to 248 are cytoplasmic; sequence GQEKLAVESI…MSNNVLKRAT (224 aa).

The protein belongs to the PIGL family.

It is found in the endoplasmic reticulum membrane. The catalysed reaction is a 6-(N-acetyl-alpha-D-glucosaminyl)-1-(1,2-diacyl-sn-glycero-3-phospho)-1D-myo-inositol + H2O = a 6-(alpha-D-glucosaminyl)-1-(1,2-diacyl-sn-glycero-3-phospho)-1D-myo-inositol + acetate. Its pathway is glycolipid biosynthesis; glycosylphosphatidylinositol-anchor biosynthesis. Involved in the second step of GPI biosynthesis. De-N-acetylation of N-acetylglucosaminyl-phosphatidylinositol. The sequence is that of Probable N-acetylglucosaminyl-phosphatidylinositol de-N-acetylase (gpi12) from Schizosaccharomyces pombe (strain 972 / ATCC 24843) (Fission yeast).